The chain runs to 435 residues: Centrosomal protein of 55 kDa (435 aa).

Disordered regions lie at residues 1–63, 213–239, and 268–287; these read MAAK…TDKA, HKEA…KVSR, and ERRR…ALLQ. Coiled coils occupy residues 18–140 and 185–373; these read SSSS…KNKY and EAYV…RESR. 2 stretches are compositionally biased toward basic and acidic residues: residues 26–49 and 213–222; these read AELE…DMKR and HKEAKSDDQS.

Its subcellular location is the cytoplasm. It is found in the cytoskeleton. The protein localises to the microtubule organizing center. The protein resides in the centrosome. It localises to the centriole. Its subcellular location is the cleavage furrow. It is found in the midbody. The protein localises to the midbody ring. Plays a role in mitotic exit and cytokinesis. Recruits PDCD6IP and TSG101 to midbody during cytokinesis. Required for successful completion of cytokinesis. Not required for microtubule nucleation. Plays a role in the development of the brain and kidney. This Danio rerio (Zebrafish) protein is Centrosomal protein of 55 kDa.